Here is a 502-residue protein sequence, read N- to C-terminus: Cytochrome P450 71B10 (502 aa).

The chain crosses the membrane as a helical span at residues Met-1 to Lys-21. A heme-binding site is contributed by Cys-443.

This sequence belongs to the cytochrome P450 family. It depends on heme as a cofactor.

It is found in the membrane. In Arabidopsis thaliana (Mouse-ear cress), this protein is Cytochrome P450 71B10 (CYP71B10).